Reading from the N-terminus, the 401-residue chain is Glutamyl-tRNA reductase (401 aa).

Substrate-binding positions include 45–48 (TCNR), serine 101, 106–108 (EDQ), and glutamine 112. Catalysis depends on cysteine 46, which acts as the Nucleophile. 177-182 (GYGEVG) serves as a coordination point for NADP(+).

It belongs to the glutamyl-tRNA reductase family. Homodimer.

The enzyme catalyses (S)-4-amino-5-oxopentanoate + tRNA(Glu) + NADP(+) = L-glutamyl-tRNA(Glu) + NADPH + H(+). The protein operates within porphyrin-containing compound metabolism; protoporphyrin-IX biosynthesis; 5-aminolevulinate from L-glutamyl-tRNA(Glu): step 1/2. Its function is as follows. Catalyzes the NADPH-dependent reduction of glutamyl-tRNA(Glu) to glutamate 1-semialdehyde (GSA). This chain is Glutamyl-tRNA reductase, found in Clostridium beijerinckii (strain ATCC 51743 / NCIMB 8052) (Clostridium acetobutylicum).